The chain runs to 380 residues: uncharacterized protein (380 aa).

HTH tetR-type domains follow at residues glutamate 3–leucine 63 and valine 201–isoleucine 262. The H-T-H motif DNA-binding region spans threonine 225–tyrosine 244.

This is an uncharacterized protein from Bacillus subtilis (strain 168).